Consider the following 758-residue polypeptide: Relaxin receptor 1 (758 aa).

Residues 1–409 (MTSGPFFFCI…ENLLASIIQR (409 aa)) are Extracellular-facing. Residues 26–63 (SCPLGSFPCGNMSRCLPQLLHCNGVDDCGNRADEDHCG) form the LDL-receptor class A domain. 3 disulfide bridges follow: C27/C40, C34/C53, and C47/C62. Residue N36 is glycosylated (N-linked (GlcNAc...) asparagine). Residues L45, N48, V50, D52, D58, and E59 each contribute to the Ca(2+) site. N-linked (GlcNAc...) asparagine glycosylation is present at N127. LRR repeat units lie at residues 127–148 (NVTVMSLQRNFIRTLPPNGFRK), 151–172 (ELQKLCLQNNRIHSVSVSAFRG), 175–196 (SLTKLYLSHNRITFLKPGVFED), 199–220 (RLEWLIIEDNHLSRISPLTFYG), 223–244 (SLILLVLMNNALTRLPDKPLCQ), 248–269 (RLHWLDFEGNRIHNLRNLTFIS), 272–293 (NLTVLVMRKNKINYLNEHAFTH), 296–317 (KLDELDLGSNKIENLPPNIFKD), 320–341 (ELSQLNISYNPIQKIEVNQFDC), and 344–365 (KLKSLSLEGIEISNIQQRMFRP). 2 N-linked (GlcNAc...) asparagine glycosylation sites follow: N264 and N272. N325 is a glycosylation site (N-linked (GlcNAc...) asparagine). Residue N368 is glycosylated (N-linked (GlcNAc...) asparagine). Residues 410–430 (VFVWVVSAITCFGNIFVICMR) traverse the membrane as a helical segment. The Cytoplasmic portion of the chain corresponds to 431–443 (PYIRSENKLHAMS). A helical membrane pass occupies residues 444–464 (IISLCCADCLMGVYLFVIGAF). Over 465 to 486 (DLKFRGEYNKHAQPWMESVHCQ) the chain is Extracellular. A disulfide bridge connects residues C485 and C563. A helical transmembrane segment spans residues 487–507 (FMGSLAILSTEVSVLLLTFLT). Topologically, residues 508–527 (LEKYICIVYPFRCLRPRKCR) are cytoplasmic. Residues 528-548 (TITVLIFIWIIGFIVAFAPLG) form a helical membrane-spanning segment. Over 549 to 577 (NKEFFKNYYGTNGVCFPLHSEDTGSTGAQ) the chain is Extracellular. The chain crosses the membrane as a helical span at residues 578-598 (IYSVVIFLGINLVAFIIIVFS). Topologically, residues 599 to 629 (YGSMFYSVHQSSVTVTEIQKQVKKEVVLAKR) are cytoplasmic. A helical transmembrane segment spans residues 630-650 (FFFIVFTDALCWIPIFILKFL). Residue S651 is a topological domain, extracellular. The helical transmembrane segment at 652-672 (LLQVEIPDSITSWVVIFILPI) threads the bilayer. Over 673–758 (NSALNPIIYT…SQSSRLNSYS (86 aa)) the chain is Cytoplasmic.

This sequence belongs to the G-protein coupled receptor 1 family. Interacts with C1QTNF8.

It is found in the cell membrane. Receptor for relaxins. The activity of this receptor is mediated by G proteins leading to stimulation of adenylate cyclase and an increase of cAMP. Binding of the ligand may also activate a tyrosine kinase pathway that inhibits the activity of a phosphodiesterase that degrades cAMP. In Mus musculus (Mouse), this protein is Relaxin receptor 1 (Rxfp1).